Reading from the N-terminus, the 444-residue chain is Signal recognition particle 54 kDa protein (444 aa).

Residues 102 to 109 (GVQGSGKT), 184 to 188 (DTAGR), and 244 to 247 (SKMD) each bind GTP.

The protein belongs to the GTP-binding SRP family. SRP54 subfamily. Part of the signal recognition particle protein translocation system, which is composed of SRP and FtsY. Archaeal SRP consists of a 7S RNA molecule of 300 nucleotides and two protein subunits: SRP54 and SRP19.

Its subcellular location is the cytoplasm. The catalysed reaction is GTP + H2O = GDP + phosphate + H(+). In terms of biological role, involved in targeting and insertion of nascent membrane proteins into the cytoplasmic membrane. Binds to the hydrophobic signal sequence of the ribosome-nascent chain (RNC) as it emerges from the ribosomes. The SRP-RNC complex is then targeted to the cytoplasmic membrane where it interacts with the SRP receptor FtsY. This Sulfolobus acidocaldarius (strain ATCC 33909 / DSM 639 / JCM 8929 / NBRC 15157 / NCIMB 11770) protein is Signal recognition particle 54 kDa protein.